We begin with the raw amino-acid sequence, 550 residues long: Dihydroxy-acid dehydratase (550 aa).

Asp78 is a binding site for Mg(2+). Position 119 (Cys119) interacts with [2Fe-2S] cluster. Mg(2+) is bound by residues Asp120 and Lys121. Lys121 carries the post-translational modification N6-carboxylysine. Position 191 (Cys191) interacts with [2Fe-2S] cluster. Residue Glu440 participates in Mg(2+) binding. Ser466 serves as the catalytic Proton acceptor.

The protein belongs to the IlvD/Edd family. Homodimer. [2Fe-2S] cluster is required as a cofactor. Mg(2+) serves as cofactor.

The catalysed reaction is (2R)-2,3-dihydroxy-3-methylbutanoate = 3-methyl-2-oxobutanoate + H2O. It carries out the reaction (2R,3R)-2,3-dihydroxy-3-methylpentanoate = (S)-3-methyl-2-oxopentanoate + H2O. It participates in amino-acid biosynthesis; L-isoleucine biosynthesis; L-isoleucine from 2-oxobutanoate: step 3/4. It functions in the pathway amino-acid biosynthesis; L-valine biosynthesis; L-valine from pyruvate: step 3/4. In terms of biological role, functions in the biosynthesis of branched-chain amino acids. Catalyzes the dehydration of (2R,3R)-2,3-dihydroxy-3-methylpentanoate (2,3-dihydroxy-3-methylvalerate) into 2-oxo-3-methylpentanoate (2-oxo-3-methylvalerate) and of (2R)-2,3-dihydroxy-3-methylbutanoate (2,3-dihydroxyisovalerate) into 2-oxo-3-methylbutanoate (2-oxoisovalerate), the penultimate precursor to L-isoleucine and L-valine, respectively. The protein is Dihydroxy-acid dehydratase of Methanococcus vannielii (strain ATCC 35089 / DSM 1224 / JCM 13029 / OCM 148 / SB).